Reading from the N-terminus, the 302-residue chain is GATA transcription factor 28 (302 aa).

A disordered region spans residues 47–66 (NAGGMSEGVETDIPSHPGNV). Positions 77–112 (GSEQGDQLTLSFQGQVYVFDSVLPEKVQAVLLLLGG) constitute a Tify domain. The segment at 119–141 (APPGLGSPHQNNRVSSLPGTPQR) is disordered. Residues 126–141 (PHQNNRVSSLPGTPQR) show a composition bias toward polar residues. The region spanning 147-189 (RLASLVRFREKRKGRNFDKKIRYTVRKEVALRMQRNKGQFTSA) is the CCT domain. The segment at 217-273 (QHQEISCRHCGIGEKSTPMMRRGPAGPRTLCNACGLMWANKGAFRDLSKASPQTAQN) adopts a GATA-type zinc-finger fold.

Belongs to the type IV zinc-finger family. Class C subfamily. In terms of tissue distribution, predominantly expressed in shoot apices, inflorescences and roots.

The protein localises to the nucleus. In terms of biological role, transcriptional activator that specifically binds 5'-GATA-3' or 5'-GAT-3' motifs within gene promoters. The chain is GATA transcription factor 28 (GATA28) from Arabidopsis thaliana (Mouse-ear cress).